A 188-amino-acid polypeptide reads, in one-letter code: HTH-type transcriptional regulator Mb3439c (188 aa).

In terms of domain architecture, HTH tetR-type spans 17-77; the sequence is EEVAAAILQA…AVLDHLGTKL (61 aa). A DNA-binding region (H-T-H motif) is located at residues 40 to 59; it reads SIRDIAARSKVNHGLVFRHF.

Negatively regulates the expression of sulfate ester dioxygenase Mb3440 and its own expression. In Mycobacterium bovis (strain ATCC BAA-935 / AF2122/97), this protein is HTH-type transcriptional regulator Mb3439c.